The primary structure comprises 147 residues: Ribonuclease H (147 aa).

The RNase H type-1 domain occupies 5-141 (ARKQITLYSD…CDELARNEAE (137 aa)). 4 residues coordinate Mg(2+): aspartate 14, glutamate 52, aspartate 74, and aspartate 133.

Belongs to the RNase H family. Monomer. Mg(2+) is required as a cofactor.

The protein localises to the cytoplasm. It catalyses the reaction Endonucleolytic cleavage to 5'-phosphomonoester.. Its function is as follows. Endonuclease that specifically degrades the RNA of RNA-DNA hybrids. The protein is Ribonuclease H of Sulfurovum sp. (strain NBC37-1).